A 326-amino-acid polypeptide reads, in one-letter code: Peroxidase 46 (326 aa).

Positions 1 to 27 are cleaved as a signal peptide; sequence MASSYRINCSTLLHLLMFLSSLLTSSA. Asparagine 28 is a glycosylation site (N-linked (GlcNAc...) asparagine). Cystine bridges form between cysteine 38/cysteine 114, cysteine 71/cysteine 76, cysteine 120/cysteine 322, and cysteine 199/cysteine 233. The active-site Proton acceptor is histidine 69. The Ca(2+) site is built by aspartate 70, valine 73, glycine 75, aspartate 77, and serine 79. An N-linked (GlcNAc...) asparagine glycan is attached at asparagine 85. Histidine 192 is a heme b binding site. Threonine 193 provides a ligand contact to Ca(2+). Aspartate 246, threonine 249, and aspartate 254 together coordinate Ca(2+). Asparagine 278 carries an N-linked (GlcNAc...) asparagine glycan.

The protein belongs to the peroxidase family. Classical plant (class III) peroxidase subfamily. Heme b serves as cofactor. Requires Ca(2+) as cofactor.

It is found in the secreted. It carries out the reaction 2 a phenolic donor + H2O2 = 2 a phenolic radical donor + 2 H2O. Its function is as follows. Removal of H(2)O(2), oxidation of toxic reductants, biosynthesis and degradation of lignin, suberization, auxin catabolism, response to environmental stresses such as wounding, pathogen attack and oxidative stress. These functions might be dependent on each isozyme/isoform in each plant tissue. This Arabidopsis thaliana (Mouse-ear cress) protein is Peroxidase 46 (PER46).